The following is a 379-amino-acid chain: Mannitol-1-phosphate 5-dehydrogenase (379 aa).

Residue 3–14 (ALHFGAGNIGRG) participates in NAD(+) binding.

This sequence belongs to the mannitol dehydrogenase family.

It catalyses the reaction D-mannitol 1-phosphate + NAD(+) = beta-D-fructose 6-phosphate + NADH + H(+). This Actinobacillus pleuropneumoniae serotype 3 (strain JL03) protein is Mannitol-1-phosphate 5-dehydrogenase.